A 105-amino-acid polypeptide reads, in one-letter code: ATP synthase subunit c (105 aa).

Helical transmembrane passes span 3 to 23 (FLAL…GGMG), 32 to 52 (SILG…IGMG), and 78 to 98 (VAMA…IIAI).

The protein belongs to the ATPase C chain family. In terms of assembly, F-type ATPases have 2 components, F(1) - the catalytic core - and F(0) - the membrane proton channel. F(1) has five subunits: alpha(3), beta(3), gamma(1), delta(1), epsilon(1). F(0) has three main subunits: a(1), b(2) and c(10-14). The alpha and beta chains form an alternating ring which encloses part of the gamma chain. F(1) is attached to F(0) by a central stalk formed by the gamma and epsilon chains, while a peripheral stalk is formed by the delta and b chains.

Its subcellular location is the cell inner membrane. In terms of biological role, f(1)F(0) ATP synthase produces ATP from ADP in the presence of a proton or sodium gradient. F-type ATPases consist of two structural domains, F(1) containing the extramembraneous catalytic core and F(0) containing the membrane proton channel, linked together by a central stalk and a peripheral stalk. During catalysis, ATP synthesis in the catalytic domain of F(1) is coupled via a rotary mechanism of the central stalk subunits to proton translocation. Functionally, key component of the F(0) channel; it plays a direct role in translocation across the membrane. A homomeric c-ring of between 10-14 subunits forms the central stalk rotor element with the F(1) delta and epsilon subunits. The protein is ATP synthase subunit c of Helicobacter pylori (strain P12).